We begin with the raw amino-acid sequence, 4538 residues long: MRWRSNVKKITKQLTLSLKNPFIYHHVVYGQNVLPGLAYIDIIYQIFREHGFSCSELQLRNLSIYQPLTAEQDAVIVLNIQCAEKKEGQWQITAKGIEKRDGKEASEEKLYMKADMHADSPAIFEETLDLSQIKASAQNVVQLDDVYEQCRRQELVHSEYMKAKGCIYEEEDGVLLELSLGSEAMLHAEGFMFHPTLIDGSGVGANHLLTSLLKGEQRLYLPLFYESFSASALLQTDCMTRIKRSSVRREKELIYVTLEFFNASGEKVAELKNFTSKLVREAELISGKHQDAQETQMTRADTAERDKPADMVSSPVNSYSEAEQFVSQLIAEKINKPVEQVEKQVGYYQMGLNSSGLLEVVETISDKIGESLSPTLLFEHTTIAELSAFLAEEYAEHFSAAGSLGQNERARVSDSINDHKTVEGSRPAPIEAAGDIAIIGLAGRYPKAANIHEFWNNLKEGKDCVSEIPESRWDWQRLEGITSPSGKDISKWGGFIDDPDCFDPQFFRITPREAETMDPQERLFLETCWETIEDAGYTPKTLAKPKGRNKRQHVGVFAGVMHKDYTLVGAEEASAENVFPLSLNYAQIANRVSYFCNFHGPSMAVDTVCSSSLTAVHLALESIRHGECDVALAGGVNLSLHPNKYMTYGVWDMFSTDGHCRTFGKDGDGYVPAEGIGAVLLKPLRQAEEDGDRIYAVIKGSAVNHVGTVSGISVPSPVSQADLIETCLEKTGIDPRTISYVEAHGTGTSLGDPIEIQGLVKAFRQYTQDRQFCSIGSVKSNIGHAESAAGISGLSKVALQLHHQKLVPSLHSEELNPYVDFEKSPFYVQHETETWKQPVIKENGEDVPYPRRAGISSFGATGSNAHIILEEHIPQAAEQDVSLSSDSDISAVIPLSARNQERLRVYAKRLLDFLHDGIQIRDLAYTLQVGREPMEERVSFLASGIQELSDQLKAFIEGRKAIQHCWKGRVSRGSEPSRPAESVHKLLEQRKLDQIAEQWANGSGVDWKLLYEGSKPKRISLPTYPFERVRYWVPKAEKKTDRSKQERHILHPLLHQNVSDISGVRFRSAFTGREFFLKDHVIKGEHVLPGAALLEMVRAAVERAAADQFPTGFRLRNIVWVRPFAVTEQQKDIDVRLYPEENGEITFEICRDPESAEESPIVYGQGSAVLCEAGENPVINIEELKASYNGRTLSPFDCYEAYTEMGIHYGDSHRAIDSLYAGENGVLVKLTMPPVISDTEDHYILHPSMIDSAFQASIGLRLGGATSLEDRKAMLPFAIQDVRIFKGCEASMWARITYSEGSTAGDRMQKLDIDLCNEEGQVCVRLTSYSARVLETDQEGPSEANDTLLFEHIWEERAAERQELIEYDTYKVVVCDVGEQMESLQNHLDCTVLQHDTETIDERFEGYAIQLFEEIKQLMHSKTGGHTFIQVAVPALDEPQLLSGLTGLLKTAELENPKLTGQLIEIETGMSAGELFEILEENRRYPRDTHIRHWQGKRFVSKWKEVSGEHLSADMPWKDKGVYLITGGAGGLGFIFATEIANQTNDAVVILTGRSPLDERKKKKLKALQKLGIQAIYRQADLADKQTVDALLKETQNVYGDLDGIIHSAGLIKDNFIMKKKKEEVQTVLAPKVAGLIHLDEATKDIPLDFFILFSSGAGAVGSAGQADYAMANAFMNAFSEYRNGQAELHKRYGKTLSVCWPLWKDGGMQIDAETARMLKRETGMVAMETDRGIQALYHGWTSGKPQVLVASGVTDRIRAFLHETGHGKGQSHNIKKSSLNQEAEKADMIGEIDEEILREKAENYFKQVLSSVIKLPAGQIDAEAPLEDYGIDSIMIMHVTGQLEKVFGSLSKTLFFEYQDIRSLTRYFIDSRREKLLDILGFETGKPSVERKSEPEKQEIPVIPRKSGFLPLQDKEQKQVREKETEEIAIIGISGRYPQADNIDELWEKLRDGRDCITEIPADRWDHSLYYDEDKDKPGKTYSKWGGFMKDVDKFDPQFFHISPREAKLMDPQERLFLQCVYETMEDAGYTREHLGRKRDAELGGSVGVYVGVMYEEYQLYGAQEQVRGRSLALTGNPSSIANRVSYYFDFHGPSIALDTMCSSSLTAIHLACQSLQRGECEAAFAGGVNVSIHPNKYLMLGQNKFMSSKGRCESFGQGGDGYVPGEGVGAVLLKPLSKAVEDGDHIYGIIKGTAINHGGKTNGYSVPNPNAQADVIKKAFVEAKVDPRTVSYIEAHGTGTSLGDPIEITGLSKVFTQETDDKQFCAIGSAKSNIGHCESAAGIAGVTKVLLQMKYRQLAPSLHSNVLNPNIDFLNSPFKVQQELEEWKRPIISVNGKDIELPRIAGVSSFGAGGVNAHILIEEYAPEPVEERLPARKQPAVIVLSAKNEERLQKRAERLLHAIREQTYVEADLHRIAYTLQVGREAMKERLAFVAETMQELEEKLYECISGTENREYVYRGQVKSNKEAIAAFAADEDMSKTIEAWLQKGKYAKVLDLWVRGLRIDWSTLYQDQKPRRISLPAYPFARDRYWIDVNAKAEEKRTEEPFAPVQPVIPKPSVDREASGKPANITLQPLMTNQDRLERVPSDTETETITAEALCDELTAGLAEVLYMDQNEIDPDEAFIDIGMDSITGLEWIKAINKQYGTSLNVTKVYDYPTTRDFAVYLAHELSTQAGEKKQTETYTPIRQKTVVPAAKPANISLQPLEHHQPVQEEAEETIQYAAAEISASRQYTVAIETLHENLRESIADVLYMEPYEVDIDEAFIDIGMDSITGLEWIKAVNKQYGTSFTVTRVYDYPTIRDFAEMLKSELGTHLDRKIEHTDSFEAAQQKPAASSHPKPAERPLQPVQHPIKKEHEKKTVPVLQDRPEDAIAIVGMSGRYPGARNVREYWDNLVHARNAIRDIPTSRWDVDKYYDPVLNKKGKVYCKSMGMLDDIEHFDPLFFNIPPSEAELMDPQHRIFLQEGYKAFEDAGYNARTLNEKKCGVYLGIMSNEYGVMLNRQSRANATGNSFAIAAARIPYFLNLKGPAIPIDTACSSSLVGTHLARQALINKEIDMALVGGVSLYLTPESYMSMCEAGMLSPDGQCKAFDNGANGFVPGEGAGALVLKRLKDAEADRDHIYGIIIGSGINQDGKTNGITAPSAKSQMDLERDIYETYGIHPESISYVEMHGTGTKQGDPIELEALSTVFQEKTDKKQFCAIGSVKSNIGHTSAAAGVAGVQKVLLCMNHKTLVPTLNFTTPNEHFEFEHSPLYVNTELKPWETADGKPRRACVSSFGYSGTNAHIVIEEYQPEKRNDRLTKQHRSALFVLSAKKEKQLKAYAEAMKDFVTSNEDIDLEDMAYTLQTGREAMDYRMAFLADSREMLIKALDDYLAEMPNGSIFAAHVKTKKSEIKLFETDHDAKALLQTWIEKKRLEKVAELWVKGLQIDWNKLYGEYTPRRISLPAYPFAEEYYWLPTQEGEPETIATAMPQFELMPKRCFLRKQWQPCPIEPAEMTNQTVAILANEETMALAEELSAYFSTYRIFDSQELDRVSAADYEHVAGAIDLIGCGTSHEHSMGWINWLQKLIEQGRASKHHLTVLGVTKGLEAYANEGVLLSGASRAGLYRMLQSEYSHLTSRHADMECEASHEELARLIAVEYYAKSTESEVCYRNGQRYRAYLTEQPAEAALSHKQVSFSTDKVLLITGGTRGLGLLCARHFVKTYGVKRLVLIGREELPPRDQWNSVKISSLAEKIKAVQELEDMGAQVQVLSLDLTDRVAVEQSLKTIHETMGAIGGVIHCAGMVNKQNPAFIRKSLEEIGQVLEPKVEGLQTLFDLLQDEPLAFFTLFSSVSAAIPALAAGQADYAMANAFMDYFAEAHQDKCPIVSIQWPNWKETGLGEVRSKALEQTGLISLTNDEGLQLLDQILSDRQYAVVLPAVPDTNVWKPDKLMQPSLPVEALSHPETKEQTSTRNLFPETVDWLVTLFSDELKIAAEDFETDEPFQEYGIDSIILAQLVQQMNQQLNGDIDPSILFEYPTIESFAHWLISKYDISAVLQPSVPEKQTPLKPQSAMKQKLVPEQRPQQISHEKTALLAEDIAIIGLSCRFPGAETLEEYWDLIRDGRSAIAPVPPERFGNSSSNYAGLIDEMNRFDHDFFMMSESDVRAMDPQALAVLEESLKLWYHAGYTEKEVKGMRAGVYIGGRSQHKPDPASLSKAKNPIVAGGQNYLAANISQFFDLKGPSIVLDTACSSALVGLNMAIQALRSGDIEAAVVGGVSLLDADAHRMFHERGLLCDKPSFHIFDKRADGVILGEGVGMVLVKTVNQAVEDGDSIYAVIKAAAINNDGRTAGPSSPNLEAQKDVMLSALEKSGKKTEEISYLEANGSGSAVTDLLELKAIQSIYRSESKAPLGLGSVKPNIGHPLCAEGIASLIKVALMLKHRQLVPFLSGNENMPYFDIEKTDLYFSRSQAEWKETTPAAAINCFADGGTNAHLIIEGWRDSAERPIRRKPLPLPELNRQPVLIKPSAQNVQKKVHSDTGASKDMFWKTFK.

The segment at 1–123 (MRWRSNVKKI…ADMHADSPAI (123 aa)) is N-terminal hotdog fold 1. In terms of domain architecture, PKS/mFAS DH 1 spans 1 to 285 (MRWRSNVKKI…SKLVREAELI (285 aa)). Catalysis depends on histidine 26, which acts as the Proton acceptor; for dehydratase activity 1. Positions 138-285 (QNVVQLDDVY…SKLVREAELI (148 aa)) are C-terminal hotdog fold 1. Residue aspartate 199 is the Proton donor; for dehydratase activity 1 of the active site. The tract at residues 289 to 314 (HQDAQETQMTRADTAERDKPADMVSS) is disordered. One can recognise a Carrier 1 domain in the interval 320-394 (SEAEQFVSQL…ELSAFLAEEY (75 aa)). At serine 354 the chain carries O-(pantetheine 4'-phosphoryl)serine. The Ketosynthase family 3 (KS3) 1 domain occupies 433 to 871 (AGDIAIIGLA…GSNAHIILEE (439 aa)). Active-site for beta-ketoacyl synthase 1 activity residues include cysteine 609, histidine 744, and histidine 784. The tract at residues 1048–1226 (HILHPLLHQN…DSLYAGENGV (179 aa)) is dehydratase. The segment at 1051–1175 (HPLLHQNVSD…GSAVLCEAGE (125 aa)) is N-terminal hotdog fold 2. The PKS/mFAS DH 2 domain maps to 1051–1340 (HPLLHQNVSD…ARVLETDQEG (290 aa)). Histidine 1080 acts as the Proton acceptor; for dehydratase activity 2 in catalysis. Residues 1189–1340 (NGRTLSPFDC…ARVLETDQEG (152 aa)) form a C-terminal hotdog fold 2 region. Residue aspartate 1251 is the Proton donor; for dehydratase activity 2 of the active site. The beta-ketoacyl reductase 1 stretch occupies residues 1520–1713 (KGVYLITGGA…WKDGGMQIDA (194 aa)). Positions 1800-1873 (EKAENYFKQV…SLTRYFIDSR (74 aa)) constitute a Carrier 2 domain. At serine 1834 the chain carries O-(pantetheine 4'-phosphoryl)serine. A Ketosynthase family 3 (KS3) 2 domain is found at 1926 to 2365 (TEEIAIIGIS…GVNAHILIEE (440 aa)). Residues cysteine 2103, histidine 2238, and histidine 2278 each act as for beta-ketoacyl synthase 2 activity in the active site. The tract at residues 2546–2568 (TEEPFAPVQPVIPKPSVDREASG) is disordered. 2 Carrier domains span residues 2597-2674 (ITAE…AHEL) and 2738-2815 (VAIE…KSEL). An O-(pantetheine 4'-phosphoryl)serine mark is found at serine 2634 and serine 2775. The disordered stretch occupies residues 2828–2854 (SFEAAQQKPAASSHPKPAERPLQPVQH). In terms of domain architecture, Ketosynthase family 3 (KS3) 3 spans 2873 to 3294 (EDAIAIVGMS…GTNAHIVIEE (422 aa)). Catalysis depends on for beta-ketoacyl synthase 3 activity residues cysteine 3040, histidine 3175, and histidine 3215. The interval 3686–3887 (DKVLLITGGT…PNWKETGLGE (202 aa)) is beta-ketoacyl reductase 2. The Carrier 5 domain maps to 3960–4037 (NLFPETVDWL…SFAHWLISKY (78 aa)). Serine 3997 carries the O-(pantetheine 4'-phosphoryl)serine modification. A Ketosynthase family 3 (KS3) 4 domain is found at 4082–4485 (AEDIAIIGLS…GTNAHLIIEG (404 aa)). Cysteine 4237 acts as the For beta-ketoacyl synthase 4 activity in catalysis.

Pantetheine 4'-phosphate serves as cofactor.

The protein resides in the cytoplasm. It participates in antibiotic biosynthesis; bacillaene biosynthesis. Its function is as follows. Involved in some intermediate steps for the synthesis of the antibiotic polyketide bacillaene which is involved in secondary metabolism. In Bacillus subtilis (strain 168), this protein is Polyketide synthase PksL (pksL).